Here is a 442-residue protein sequence, read N- to C-terminus: Chromosomal replication initiator protein DnaA (442 aa).

A domain I, interacts with DnaA modulators region spans residues 1–75; that stretch reads MDAWPRCLER…GNGEVALAVG (75 aa). The segment at 75 to 104 is domain II; it reads GSRPRAPEPAPAAAAVPSAPQAAPMVPFAG. The domain III, AAA+ region stretch occupies residues 105-322; sequence NLDSHYTFAN…GALNTLVARA (218 aa). Gly-150, Gly-152, Lys-153, and Thr-154 together coordinate ATP. Residues 323-442 form a domain IV, binds dsDNA region; sequence NFTGRSITVE…WEKLIRKLSE (120 aa).

This sequence belongs to the DnaA family. Oligomerizes as a right-handed, spiral filament on DNA at oriC.

The protein localises to the cytoplasm. Functionally, plays an essential role in the initiation and regulation of chromosomal replication. ATP-DnaA binds to the origin of replication (oriC) to initiate formation of the DNA replication initiation complex once per cell cycle. Binds the DnaA box (a 9 base pair repeat at the origin) and separates the double-stranded (ds)DNA. Forms a right-handed helical filament on oriC DNA; dsDNA binds to the exterior of the filament while single-stranded (ss)DNA is stabiized in the filament's interior. The ATP-DnaA-oriC complex binds and stabilizes one strand of the AT-rich DNA unwinding element (DUE), permitting loading of DNA polymerase. After initiation quickly degrades to an ADP-DnaA complex that is not apt for DNA replication. Binds acidic phospholipids. This Xanthomonas euvesicatoria pv. vesicatoria (strain 85-10) (Xanthomonas campestris pv. vesicatoria) protein is Chromosomal replication initiator protein DnaA.